A 282-amino-acid polypeptide reads, in one-letter code: 3-methyl-2-oxobutanoate hydroxymethyltransferase (282 aa).

Residues Asp-63 and Asp-102 each coordinate Mg(2+). Residues 63–64 (DS), Asp-102, and Lys-132 each bind 3-methyl-2-oxobutanoate. Residue Glu-134 coordinates Mg(2+). Glu-200 serves as the catalytic Proton acceptor.

This sequence belongs to the PanB family. As to quaternary structure, homodecamer; pentamer of dimers. It depends on Mg(2+) as a cofactor.

The protein resides in the cytoplasm. It catalyses the reaction 3-methyl-2-oxobutanoate + (6R)-5,10-methylene-5,6,7,8-tetrahydrofolate + H2O = 2-dehydropantoate + (6S)-5,6,7,8-tetrahydrofolate. Its pathway is cofactor biosynthesis; (R)-pantothenate biosynthesis; (R)-pantoate from 3-methyl-2-oxobutanoate: step 1/2. Its function is as follows. Catalyzes the reversible reaction in which hydroxymethyl group from 5,10-methylenetetrahydrofolate is transferred onto alpha-ketoisovalerate to form ketopantoate. This Mycobacterium sp. (strain JLS) protein is 3-methyl-2-oxobutanoate hydroxymethyltransferase.